Here is an 86-residue protein sequence, read N- to C-terminus: Neurotoxin LmNaTx17 (86 aa).

The N-terminal stretch at 1–18 (MKILFVIVLAAFFIGVHC) is a signal peptide. An LCN-type CS-alpha/beta domain is found at 19–85 (KHGYPVQYSG…TWDYKTGKCR (67 aa)). Cystine bridges form between cysteine 33/cysteine 84, cysteine 37/cysteine 58, cysteine 44/cysteine 65, and cysteine 48/cysteine 67.

It belongs to the long (4 C-C) scorpion toxin superfamily. Sodium channel inhibitor family. Beta subfamily. Expressed by the venom gland.

The protein localises to the secreted. Its function is as follows. Binds voltage-independently at site-4 of sodium channels (Nav) and shift the voltage of activation toward more negative potentials thereby affecting sodium channel activation and promoting spontaneous and repetitive firing. This is Neurotoxin LmNaTx17 from Lychas mucronatus (Chinese swimming scorpion).